A 527-amino-acid chain; its full sequence is MSLRPNSRTEARRSRYKVAVDAEEGRRRREDNMVEIRKNKREENLLKKRREGLLQAQQFPSTAAVSHLDKKLETLPELIAGVWSDDSSLQLECTTQFRKLLSIERNPPIEEVIQSGVVPRFVEFLARDDYPQLQFEAAWALTNIASGTSENTKVVIDYGSVPIFIRLLSSPSDDVREQAVWALGNIAGDSPKYRDLVLGHGALVALLAQFNEQAKLSMLRNATWTLSNFCRGKPQPLFEQTKAALPTLGRLIHSNDEEVLTDACWALSYLSDGTNDKIQAVIEAGVCSRLVELLLHSSPSVLIPALRTVGNIVTGDDIQTQVMIDHHALPCLVNLLTQNYKKSIKKEACWTISNITAGNRNQIQIVIEAGIIAPLVYLLQNAEFEIKKEAAWAISNATSGGNHDQIKFLVSQGCIKPLCDLLVCPDPRIVTVCLEGLENILKIGEADKDLGNTEGVNVYAQLIDEAEGLEKIENLQSHDNTEIYEKAVKILETYWLEEEDVPVSLNEDQFEFGGADISLPSGGFNFS.

Positions 1-58 constitute an IBB domain; sequence MSLRPNSRTEARRSRYKVAVDAEEGRRRREDNMVEIRKNKREENLLKKRREGLLQAQQ. ARM repeat units follow at residues 109–151, 152–196, 197–234, 235–279, 280–319, 320–362, 363–403, and 404–445; these read IEEV…TSEN, TKVV…YRDL, VLGH…RGKP, QPLF…DKIQ, AVIE…DDIQ, TQVM…NRNQ, IQIV…GGNH, and DQIK…KIGE.

This sequence belongs to the importin alpha family. In terms of assembly, forms a complex with importin subunit beta-1.

It localises to the cytoplasm. In terms of biological role, binds specifically and directly to substrates containing either a simple or bipartite NLS motif. Promotes docking of import substrates to the nuclear envelope. Seems to act as a cytosolic receptor for both simple and bipartite NLS motifs. The chain is Importin subunit alpha from Solanum lycopersicum (Tomato).